Consider the following 170-residue polypeptide: Ergosterol biosynthetic protein 28 (170 aa).

The next 3 helical transmembrane spans lie at phenylalanine 7 to isoleucine 27, threonine 116 to phenylalanine 136, and phenylalanine 141 to leucine 161.

It belongs to the ERG28 family. Heterotetramer of ERG25, ERG26, ERG27 and ERG28. ERG28 acts as a scaffold to tether ERG27 and other 4,4-demethylation-related enzymes, forming a demethylation enzyme complex, in the endoplasmic reticulum.

The protein localises to the endoplasmic reticulum membrane. It functions in the pathway steroid metabolism; ergosterol biosynthesis. In terms of biological role, sterol 24-C-methyltransferase; part of the third module of ergosterol biosynthesis pathway that includes the late steps of the pathway. ERG28 has a role as a scaffold to help anchor the catalytic components of the C-4 demethylation complex ERG25, ERG26 and ERG27 to the endoplasmic reticulum. The third module or late pathway involves the ergosterol synthesis itself through consecutive reactions that mainly occur in the endoplasmic reticulum (ER) membrane. Firstly, the squalene synthase ERG9 catalyzes the condensation of 2 farnesyl pyrophosphate moieties to form squalene, which is the precursor of all steroids. Squalene synthase is crucial for balancing the incorporation of farnesyl diphosphate (FPP) into sterol and nonsterol isoprene synthesis. Secondly, squalene is converted into lanosterol by the consecutive action of the squalene epoxidase ERG1 and the lanosterol synthase ERG7. Then, the delta(24)-sterol C-methyltransferase ERG6 methylates lanosterol at C-24 to produce eburicol. Eburicol is the substrate of the sterol 14-alpha demethylase encoded by CYP51A, CYP51B and CYP51C, to yield 4,4,24-trimethyl ergosta-8,14,24(28)-trienol. CYP51B encodes the enzyme primarily responsible for sterol 14-alpha-demethylation, and plays an essential role in ascospore formation. CYP51A encodes an additional sterol 14-alpha-demethylase, induced on ergosterol depletion and responsible for the intrinsic variation in azole sensitivity. The third CYP51 isoform, CYP51C, does not encode a sterol 14-alpha-demethylase, but is required for full virulence on host wheat ears. The C-14 reductase ERG24 then reduces the C14=C15 double bond which leads to 4,4-dimethylfecosterol. A sequence of further demethylations at C-4, involving the C-4 demethylation complex containing the C-4 methylsterol oxidases ERG25, the sterol-4-alpha-carboxylate 3-dehydrogenase ERG26 and the 3-keto-steroid reductase ERG27, leads to the production of fecosterol via 4-methylfecosterol. ERG28 has a role as a scaffold to help anchor ERG25, ERG26 and ERG27 to the endoplasmic reticulum. The C-8 sterol isomerase ERG2 then catalyzes the reaction which results in unsaturation at C-7 in the B ring of sterols and thus converts fecosterol to episterol. The sterol-C5-desaturases ERG3A and ERG3BB then catalyze the introduction of a C-5 double bond in the B ring to produce 5-dehydroepisterol. The C-22 sterol desaturases ERG5A and ERG5B further convert 5-dehydroepisterol into ergosta-5,7,22,24(28)-tetraen-3beta-ol by forming the C-22(23) double bond in the sterol side chain. Finally, ergosta-5,7,22,24(28)-tetraen-3beta-ol is substrate of the C-24(28) sterol reductase ERG4 to produce ergosterol. This is Ergosterol biosynthetic protein 28 from Gibberella zeae (strain ATCC MYA-4620 / CBS 123657 / FGSC 9075 / NRRL 31084 / PH-1) (Wheat head blight fungus).